The following is a 117-amino-acid chain: Protein Turandot F (117 aa).

An N-terminal signal peptide occupies residues 1–22 (MKTVILFSFLLVLLGYLGAGHA).

Belongs to the Turandot family.

Its subcellular location is the secreted. A humoral factor that may play a role in stress tolerance. The protein is Protein Turandot F of Drosophila sechellia (Fruit fly).